The sequence spans 341 residues: Endoglucanase 1 (341 aa).

The signal sequence occupies residues Met1 to Ala16. The propeptide occupies Leu17 to Arg30. Glu166 serves as the catalytic Proton donor. The active-site Nucleophile is the Glu275.

Belongs to the glycosyl hydrolase 5 (cellulase A) family.

The catalysed reaction is Endohydrolysis of (1-&gt;4)-beta-D-glucosidic linkages in cellulose, lichenin and cereal beta-D-glucans.. In terms of biological role, has endoglucanase activity on carboxymethyl-cellulose (CMC). This chain is Endoglucanase 1 (CMC1), found in Saitozyma flava (Cryptococcus flavus).